Consider the following 423-residue polypeptide: Gamma-glutamyl phosphate reductase (423 aa).

It belongs to the gamma-glutamyl phosphate reductase family.

The protein localises to the cytoplasm. The enzyme catalyses L-glutamate 5-semialdehyde + phosphate + NADP(+) = L-glutamyl 5-phosphate + NADPH + H(+). The protein operates within amino-acid biosynthesis; L-proline biosynthesis; L-glutamate 5-semialdehyde from L-glutamate: step 2/2. Functionally, catalyzes the NADPH-dependent reduction of L-glutamate 5-phosphate into L-glutamate 5-semialdehyde and phosphate. The product spontaneously undergoes cyclization to form 1-pyrroline-5-carboxylate. The chain is Gamma-glutamyl phosphate reductase from Burkholderia thailandensis (strain ATCC 700388 / DSM 13276 / CCUG 48851 / CIP 106301 / E264).